Here is a 255-residue protein sequence, read N- to C-terminus: Probable iron chelatin transport ATP-binding protein jhp_0821 (255 aa).

One can recognise an ABC transporter domain in the interval L3 to P240. A35–T42 provides a ligand contact to ATP.

The protein belongs to the ABC transporter superfamily.

The protein localises to the cell inner membrane. In terms of biological role, part of a binding-protein-dependent transport system for an iron chelatin. Probably responsible for energy coupling to the transport system (Potential). The chain is Probable iron chelatin transport ATP-binding protein jhp_0821 from Helicobacter pylori (strain J99 / ATCC 700824) (Campylobacter pylori J99).